The following is a 704-amino-acid chain: Polyribonucleotide nucleotidyltransferase (704 aa).

2 residues coordinate Mg(2+): Asp-488 and Asp-494. A KH domain is found at 555–614 (PRITTLKINPEKIRDVIGKGGATIRALTEETGTTIELEDDGTVKIASANGDATKEAIRRI). The region spanning 624–692 (GTIYNGKVVR…RQGRVRLSMK (69 aa)) is the S1 motif domain.

This sequence belongs to the polyribonucleotide nucleotidyltransferase family. Component of the RNA degradosome, which is a multiprotein complex involved in RNA processing and mRNA degradation. Mg(2+) is required as a cofactor.

It localises to the cytoplasm. It carries out the reaction RNA(n+1) + phosphate = RNA(n) + a ribonucleoside 5'-diphosphate. In terms of biological role, involved in mRNA degradation. Catalyzes the phosphorolysis of single-stranded polyribonucleotides processively in the 3'- to 5'-direction. This is Polyribonucleotide nucleotidyltransferase from Shewanella sediminis (strain HAW-EB3).